The primary structure comprises 116 residues: Large ribosomal subunit protein bL20 (116 aa).

This sequence belongs to the bacterial ribosomal protein bL20 family.

Binds directly to 23S ribosomal RNA and is necessary for the in vitro assembly process of the 50S ribosomal subunit. It is not involved in the protein synthesizing functions of that subunit. The chain is Large ribosomal subunit protein bL20 from Helicobacter pylori (strain G27).